Here is a 240-residue protein sequence, read N- to C-terminus: Thiopurine S-methyltransferase (240 aa).

Position 24 to 35 (24 to 35) interacts with S-adenosyl-L-methionine; sequence WKDKWVTRHISF. F35 lines the substrate pocket. K53 carries the post-translational modification N6-acetyllysine. Residues L64, E85, 129–130, and R147 each bind S-adenosyl-L-methionine; that span reads SI.

This sequence belongs to the class I-like SAM-binding methyltransferase superfamily. TPMT family. In terms of assembly, monomer.

Its subcellular location is the cytoplasm. The catalysed reaction is S-adenosyl-L-methionine + a thiopurine = S-adenosyl-L-homocysteine + a thiopurine S-methylether.. It carries out the reaction mercaptopurine + S-adenosyl-L-methionine = 6-methylthiopurine + S-adenosyl-L-homocysteine + H(+). In terms of biological role, catalyzes the S-methylation of thiopurine drugs such as 6-mercaptopurine (also called mercaptopurine, 6-MP or its brand name Purinethol) using S-adenosyl-L-methionine as the methyl donor. TPMT activity modulates the cytotoxic effects of thiopurine prodrugs. A natural substrate for this enzyme has yet to be identified. In Mus spretus (Western Mediterranean mouse), this protein is Thiopurine S-methyltransferase (Tpmt).